A 329-amino-acid chain; its full sequence is 1-phosphatidylinositol phosphodiesterase (329 aa).

Positions 1 to 31 are cleaved as a signal peptide; that stretch reads MSNKKLILKLFICSTIFITFVFALHDKRVVA. Positions 51-194 constitute a PI-PLC X-box domain; sequence NIPLARISIP…ARGKIVLLKR (144 aa). The Proton acceptor role is filled by H63. H113 (proton donor) is an active-site residue.

Its subcellular location is the secreted. It catalyses the reaction a 1,2-diacyl-sn-glycero-3-phospho-(1D-myo-inositol) = 1D-myo-inositol 1,2-cyclic phosphate + a 1,2-diacyl-sn-glycerol. In terms of biological role, cleaves glycosylphosphatidylinositol (GPI) and phosphatidylinositol (PI) anchors but not PI phosphates. This chain is 1-phosphatidylinositol phosphodiesterase, found in Bacillus thuringiensis.